A 126-amino-acid polypeptide reads, in one-letter code: MYYFSRVAARTFCCCIFFCLATAYSRPDRNPRKIEKKDKKFFGASKNTNPANAMGNLFKAPTIEYVVEEVTRTHQPEQYDIPTDMSPLMTIAASESADKFTDKFFVDQSSIMKEKTSSKGNARTLL.

It is found in the mitochondrion. This Saccharomyces cerevisiae (strain ATCC 204508 / S288c) (Baker's yeast) protein is Protein FMP49, mitochondrial.